The sequence spans 136 residues: Keratin-associated protein 15-1 (136 aa).

The protein belongs to the PMG family. As to quaternary structure, interacts with hair keratins.

In terms of biological role, in the hair cortex, hair keratin intermediate filaments are embedded in an interfilamentous matrix, consisting of hair keratin-associated proteins (KRTAP), which are essential for the formation of a rigid and resistant hair shaft through their extensive disulfide bond cross-linking with abundant cysteine residues of hair keratins. The matrix proteins include the high-sulfur and high-glycine-tyrosine keratins. This chain is Keratin-associated protein 15-1 (KRTAP15-1), found in Capra hircus (Goat).